A 285-amino-acid polypeptide reads, in one-letter code: HTH-type transcriptional regulator MurR (285 aa).

The HTH rpiR-type domain maps to 1–77 (MLYLTKISNA…MALIGEYSAS (77 aa)). A DNA-binding region (H-T-H motif) is located at residues 37–56 (SRQMAKQLGISQSSIVKFAQ). In terms of domain architecture, SIS spans 128–279 (IIEVISKAPF…SLKMIQRSSE (152 aa)).

As to quaternary structure, homotetramer.

Its pathway is amino-sugar metabolism; N-acetylmuramate degradation [regulation]. Its function is as follows. Represses the expression of the murPQ operon involved in the uptake and degradation of N-acetylmuramic acid (MurNAc). Binds to two adjacent inverted repeats within the operator region. MurNAc 6-phosphate, the substrate of MurQ, is the specific inducer that weakens binding of MurR to the operator. This Shigella boydii serotype 18 (strain CDC 3083-94 / BS512) protein is HTH-type transcriptional regulator MurR.